Reading from the N-terminus, the 324-residue chain is Phospho-N-acetylmuramoyl-pentapeptide-transferase (324 aa).

10 consecutive transmembrane segments (helical) span residues 5–25 (VILF…PILI), 50–70 (GTPT…AIVM), 77–97 (LSAE…LGFL), 117–137 (LIGQ…CHFS), 147–167 (LSID…VGGS), 176–196 (LDGL…ILAW), 203–223 (VAIF…FNAH), 227–247 (VFMG…VAIL), 250–270 (LEIL…SVIL), and 302–322 (VVVT…YIEV).

It belongs to the glycosyltransferase 4 family. MraY subfamily. Mg(2+) serves as cofactor.

Its subcellular location is the cell membrane. The catalysed reaction is UDP-N-acetyl-alpha-D-muramoyl-L-alanyl-gamma-D-glutamyl-meso-2,6-diaminopimeloyl-D-alanyl-D-alanine + di-trans,octa-cis-undecaprenyl phosphate = di-trans,octa-cis-undecaprenyl diphospho-N-acetyl-alpha-D-muramoyl-L-alanyl-D-glutamyl-meso-2,6-diaminopimeloyl-D-alanyl-D-alanine + UMP. Its pathway is cell wall biogenesis; peptidoglycan biosynthesis. Functionally, catalyzes the initial step of the lipid cycle reactions in the biosynthesis of the cell wall peptidoglycan: transfers peptidoglycan precursor phospho-MurNAc-pentapeptide from UDP-MurNAc-pentapeptide onto the lipid carrier undecaprenyl phosphate, yielding undecaprenyl-pyrophosphoryl-MurNAc-pentapeptide, known as lipid I. The polypeptide is Phospho-N-acetylmuramoyl-pentapeptide-transferase (Bacillus velezensis (strain DSM 23117 / BGSC 10A6 / LMG 26770 / FZB42) (Bacillus amyloliquefaciens subsp. plantarum)).